The chain runs to 158 residues: Probable flavodoxin 1 (158 aa).

A Flavodoxin-like domain is found at 4–144 (ALITYASMSG…SCRAFARGFL (141 aa)).

It belongs to the flavodoxin family. It depends on FMN as a cofactor.

Low-potential electron donor to a number of redox enzymes. In Bacillus subtilis (strain 168), this protein is Probable flavodoxin 1 (ykuN).